The following is a 401-amino-acid chain: Imidazolonepropionase (401 aa).

His66 and His68 together coordinate Fe(3+). The Zn(2+) site is built by His66 and His68. Positions 75, 138, and 171 each coordinate 4-imidazolone-5-propanoate. N-formimidoyl-L-glutamate is bound at residue Tyr138. His236 provides a ligand contact to Fe(3+). His236 contributes to the Zn(2+) binding site. Position 239 (Gln239) interacts with 4-imidazolone-5-propanoate. Residue Asp311 participates in Fe(3+) binding. Residue Asp311 participates in Zn(2+) binding. The N-formimidoyl-L-glutamate site is built by Asn313 and Gly315. Thr316 is a binding site for 4-imidazolone-5-propanoate.

Belongs to the metallo-dependent hydrolases superfamily. HutI family. The cofactor is Zn(2+). Requires Fe(3+) as cofactor.

Its subcellular location is the cytoplasm. The catalysed reaction is 4-imidazolone-5-propanoate + H2O = N-formimidoyl-L-glutamate. It functions in the pathway amino-acid degradation; L-histidine degradation into L-glutamate; N-formimidoyl-L-glutamate from L-histidine: step 3/3. Catalyzes the hydrolytic cleavage of the carbon-nitrogen bond in imidazolone-5-propanoate to yield N-formimidoyl-L-glutamate. It is the third step in the universal histidine degradation pathway. The protein is Imidazolonepropionase of Acinetobacter baumannii (strain ATCC 17978 / DSM 105126 / CIP 53.77 / LMG 1025 / NCDC KC755 / 5377).